Here is a 471-residue protein sequence, read N- to C-terminus: Thymidine phosphorylase (471 aa).

A compositionally biased stretch (pro residues) spans 1–10 (MAAPGTPPPS). A disordered region spans residues 1 to 21 (MAAPGTPPPSASGGGGGEPRQ). Phosphothreonine is present on Thr6. Substrate-binding residues include His102, Arg188, Ser203, and Lys207.

Belongs to the thymidine/pyrimidine-nucleoside phosphorylase family. As to quaternary structure, homodimer.

It catalyses the reaction thymidine + phosphate = 2-deoxy-alpha-D-ribose 1-phosphate + thymine. The protein operates within pyrimidine metabolism; dTMP biosynthesis via salvage pathway; dTMP from thymine: step 1/2. Its function is as follows. Catalyzes the reversible phosphorolysis of thymidine. The produced molecules are then utilized as carbon and energy sources or in the rescue of pyrimidine bases for nucleotide synthesis. The polypeptide is Thymidine phosphorylase (Tymp) (Mus musculus (Mouse)).